A 683-amino-acid polypeptide reads, in one-letter code: Methionine--tRNA ligase (683 aa).

Positions 15–25 match the 'HIGH' region motif; sequence PYANGPIHLGH. Zn(2+) contacts are provided by C146, C149, C159, and C162. The short motif at 332 to 336 is the 'KMSKS' region element; it reads KMSKS. K335 lines the ATP pocket. The tRNA-binding domain maps to 581–683; it reads DFCKVDLRVA…AGAKAGQRVK (103 aa).

It belongs to the class-I aminoacyl-tRNA synthetase family. MetG type 1 subfamily. In terms of assembly, homodimer. It depends on Zn(2+) as a cofactor.

The protein resides in the cytoplasm. It catalyses the reaction tRNA(Met) + L-methionine + ATP = L-methionyl-tRNA(Met) + AMP + diphosphate. Functionally, is required not only for elongation of protein synthesis but also for the initiation of all mRNA translation through initiator tRNA(fMet) aminoacylation. This chain is Methionine--tRNA ligase, found in Histophilus somni (strain 2336) (Haemophilus somnus).